A 67-amino-acid polypeptide reads, in one-letter code: MMSDATIVNCPTCGKEVIWGEKSPFRPFCSKRCQLIDLGEWAAEEKRIPSSGDRSDTDGWSEEENQP.

Residues Cys-10, Cys-13, Cys-29, and Cys-33 each coordinate Zn(2+). Basic and acidic residues predominate over residues 44-57 (EEKRIPSSGDRSDT). Residues 44-67 (EEKRIPSSGDRSDTDGWSEEENQP) are disordered.

Belongs to the DNA gyrase inhibitor YacG family. As to quaternary structure, interacts with GyrB. It depends on Zn(2+) as a cofactor.

In terms of biological role, inhibits all the catalytic activities of DNA gyrase by preventing its interaction with DNA. Acts by binding directly to the C-terminal domain of GyrB, which probably disrupts DNA binding by the gyrase. This Cronobacter sakazakii (strain ATCC BAA-894) (Enterobacter sakazakii) protein is DNA gyrase inhibitor YacG.